The following is an 847-amino-acid chain: Glucans biosynthesis glucosyltransferase H (847 aa).

The Cytoplasmic segment spans residues 1–138 (MNKTTEYIDA…KWRTVGTIRR (138 aa)). The helical transmembrane segment at 139–156 (YILLILTLAQTVVATWYM) threads the bilayer. Topologically, residues 157 to 193 (KTILPYQGWALINPMDMVGQDVWVSFMQLLPYMLQTG) are periplasmic. The helical transmembrane segment at 194 to 216 (ILILFAVLFCWVSAGFWTALMGF) threads the bilayer. Over 217-511 (LQLLIGRDKY…LVKGMHPVHR (295 aa)) the chain is Cytoplasmic. The chain crosses the membrane as a helical span at residues 512-534 (AVFLTGVMSYLSAPLWFMFLALS). Topologically, residues 535–567 (TALQVVHALTEPQYFLQPRQLFPVWPQWRPELA) are periplasmic. The helical transmembrane segment at 568 to 590 (IALFASTMVLLFLPKLLSILLIW) threads the bilayer. Residues 591-602 (CKGTKEYGGFWR) are Cytoplasmic-facing. A helical membrane pass occupies residues 603–625 (VTLSLLLEVLFSVLLAPVRMLFH). The Periplasmic segment spans residues 626–679 (TVFVVSAFLGWEVVWNSPQRDDDSTSWGEAFKRHGSQLLLGLVWAVGMAWLDLR). Residues 680-702 (FLFWLAPIVFSLILSPFVSVISS) form a helical membrane-spanning segment. Over 703-847 (RATVGLRTKR…ALRKPDAASQ (145 aa)) the chain is Cytoplasmic.

The protein belongs to the glycosyltransferase 2 family. OpgH subfamily.

The protein resides in the cell inner membrane. The protein operates within glycan metabolism; osmoregulated periplasmic glucan (OPG) biosynthesis. Its function is as follows. Involved in the biosynthesis of osmoregulated periplasmic glucans (OPGs). The polypeptide is Glucans biosynthesis glucosyltransferase H (Escherichia coli O6:H1 (strain CFT073 / ATCC 700928 / UPEC)).